We begin with the raw amino-acid sequence, 75 residues long: Tautomerase PptA (75 aa).

The Proton acceptor; via imino nitrogen role is filled by proline 2.

The protein belongs to the 4-oxalocrotonate tautomerase family. PptA subfamily. In terms of assembly, homodimer.

The protein resides in the cytoplasm. This Shigella sonnei (strain Ss046) protein is Tautomerase PptA.